Reading from the N-terminus, the 361-residue chain is D-alanine--D-alanine ligase (361 aa).

One can recognise an ATP-grasp domain in the interval 139-336 (KLLLKEKEIS…FSQIIDNMIN (198 aa)). 167–222 (EKNLGYPMIVKPARLGSSIGVSKVVDRKNFEEAVKNVLLFDNKVLVEKWINAREIN) is a binding site for ATP. Asp296, Glu307, and Asn309 together coordinate Mg(2+).

Belongs to the D-alanine--D-alanine ligase family. Mg(2+) is required as a cofactor. Mn(2+) serves as cofactor.

The protein localises to the cytoplasm. The catalysed reaction is 2 D-alanine + ATP = D-alanyl-D-alanine + ADP + phosphate + H(+). It participates in cell wall biogenesis; peptidoglycan biosynthesis. Functionally, cell wall formation. In Thermosipho melanesiensis (strain DSM 12029 / CIP 104789 / BI429), this protein is D-alanine--D-alanine ligase.